Reading from the N-terminus, the 45-residue chain is FKBP-type peptidyl-prolyl cis-trans isomerase, chloroplastic (45 aa).

It belongs to the FKBP-type PPIase family. In terms of tissue distribution, expressed in leaves, but not in roots.

The protein localises to the plastid. The protein resides in the chloroplast thylakoid lumen. It carries out the reaction [protein]-peptidylproline (omega=180) = [protein]-peptidylproline (omega=0). In terms of biological role, PPIases accelerate the folding of proteins. It catalyzes the cis-trans isomerization of proline imidic peptide bonds in oligopeptides. This chain is FKBP-type peptidyl-prolyl cis-trans isomerase, chloroplastic, found in Vicia faba (Broad bean).